The chain runs to 201 residues: Akirin (201 aa).

Positions 1–133 are disordered; sequence MACATLKRAL…PRRPDSPQNL (133 aa). The short motif at 20-25 is the Nuclear localization signal element; it reads PKRRRC. A phosphoserine mark is found at serine 39 and serine 41. Polar residues-rich tracts occupy residues 44–57 and 65–75; these read GPSTSAGLPHTPSN and EPSPFSESSLA. The residue at position 67 (serine 67) is a Phosphoserine. Residues 112–122 are compositionally biased toward low complexity; the sequence is SESSGSEMGPE. 2 positions are modified to phosphoserine: serine 123 and serine 129.

Belongs to the akirin family. In terms of assembly, interacts with dmap1. Interacts with bap60 and rel; interaction is immune stimulation-dependent; activates selected rel target gene promoters. Interacts with bap55; interaction is immune stimulation-dependent. Interacts with twi. Post-translationally, polyubiquitinated via 'Lys-63'-linked ubiquitin by Hyd, promoting interaction with rel. Ubiquitous.

Its subcellular location is the nucleus. Molecular adapter that acts as a bridge between a variety of multiprotein complexes, and which is required for embryonic development and for normal innate immune response. Acts as a regulator of embryonic myogenesis by bridging Twist (twi) with the SWI/SNF-like Brahma complex, promoting expression of twi-regulated genes during myogenesis. Effector of immune deficiency pathway (Imd) by acting either downstream of, or at the level of, the NF-kappa-B factor Relish (Rel). Acts by bridging the NF-kappa-B factor Rel and the Brahma complex through bap60 interaction, leading to activation a subset of NF-kappa-B factor Relish (Rel) effector genes. Not part of the Toll pathway. Required for the formation of the heart by promoting expression ot tinman (tin). This chain is Akirin, found in Drosophila melanogaster (Fruit fly).